We begin with the raw amino-acid sequence, 154 residues long: Ribosome maturation factor RimP (154 aa).

It belongs to the RimP family.

It localises to the cytoplasm. Functionally, required for maturation of 30S ribosomal subunits. The sequence is that of Ribosome maturation factor RimP from Heliobacterium modesticaldum (strain ATCC 51547 / Ice1).